Here is a 342-residue protein sequence, read N- to C-terminus: tRNA N6-adenosine threonylcarbamoyltransferase (342 aa).

Residues His111 and His115 each coordinate Fe cation. Substrate contacts are provided by residues 134–138 (LVSGG), Asp167, Gly180, and Asn276. Asp304 lines the Fe cation pocket.

It belongs to the KAE1 / TsaD family. The cofactor is Fe(2+).

The protein resides in the cytoplasm. The enzyme catalyses L-threonylcarbamoyladenylate + adenosine(37) in tRNA = N(6)-L-threonylcarbamoyladenosine(37) in tRNA + AMP + H(+). Its function is as follows. Required for the formation of a threonylcarbamoyl group on adenosine at position 37 (t(6)A37) in tRNAs that read codons beginning with adenine. Is involved in the transfer of the threonylcarbamoyl moiety of threonylcarbamoyl-AMP (TC-AMP) to the N6 group of A37, together with TsaE and TsaB. TsaD likely plays a direct catalytic role in this reaction. In Helicobacter acinonychis (strain Sheeba), this protein is tRNA N6-adenosine threonylcarbamoyltransferase.